The chain runs to 144 residues: MAMSVHCDIVSAEEELFSGLVEMVIAHGHLGDLGILPGHTPLLTDLKPGPVRVIKQGGTEEVFYISGGFLEVQPSMVKVLADTAVRAGDLDEAAAIEARKAAEKALSEKGTEFDYGSAAARLAEAAAQLRTIEEMRKKFGGRSR.

It belongs to the ATPase epsilon chain family. As to quaternary structure, F-type ATPases have 2 components, CF(1) - the catalytic core - and CF(0) - the membrane proton channel. CF(1) has five subunits: alpha(3), beta(3), gamma(1), delta(1), epsilon(1). CF(0) has three main subunits: a, b and c.

The protein resides in the cell inner membrane. Produces ATP from ADP in the presence of a proton gradient across the membrane. This chain is ATP synthase epsilon chain, found in Ectopseudomonas mendocina (strain ymp) (Pseudomonas mendocina).